Reading from the N-terminus, the 351-residue chain is UDP-3-O-acylglucosamine N-acyltransferase (351 aa).

H257 functions as the Proton acceptor in the catalytic mechanism.

This sequence belongs to the transferase hexapeptide repeat family. LpxD subfamily. In terms of assembly, homotrimer.

It carries out the reaction a UDP-3-O-[(3R)-3-hydroxyacyl]-alpha-D-glucosamine + a (3R)-hydroxyacyl-[ACP] = a UDP-2-N,3-O-bis[(3R)-3-hydroxyacyl]-alpha-D-glucosamine + holo-[ACP] + H(+). It functions in the pathway bacterial outer membrane biogenesis; LPS lipid A biosynthesis. Catalyzes the N-acylation of UDP-3-O-acylglucosamine using 3-hydroxyacyl-ACP as the acyl donor. Is involved in the biosynthesis of lipid A, a phosphorylated glycolipid that anchors the lipopolysaccharide to the outer membrane of the cell. This Brucella abortus (strain S19) protein is UDP-3-O-acylglucosamine N-acyltransferase.